The following is a 500-amino-acid chain: Maturase K (500 aa).

The protein belongs to the intron maturase 2 family. MatK subfamily.

The protein resides in the plastid. It is found in the chloroplast. Functionally, usually encoded in the trnK tRNA gene intron. Probably assists in splicing its own and other chloroplast group II introns. The chain is Maturase K from Brasenia schreberi (Water shield).